Here is a 152-residue protein sequence, read N- to C-terminus: TRAPP-associated protein TCA17 (152 aa).

This sequence belongs to the TRAPP small subunits family. Sedlin subfamily. Interacts with the TRAPP II complex; TRAPP II subunits TRS33 and TRS65 are required for this interaction.

It is found in the golgi apparatus. Its subcellular location is the trans-Golgi network. Functionally, required, together with the TRAPP II subunit TRS33, for TRAPP II complex assembly or stability, and for proper Golgi localization of TRAPP and the Rab GTPase YPT31. This Saccharomyces cerevisiae (strain ATCC 204508 / S288c) (Baker's yeast) protein is TRAPP-associated protein TCA17 (TCA17).